We begin with the raw amino-acid sequence, 128 residues long: Glycine cleavage system H protein (128 aa).

A Lipoyl-binding domain is found at 23 to 105 (IGIVGITWFA…YGEGWILKLE (83 aa)). Lys-64 is modified (N6-lipoyllysine).

It belongs to the GcvH family. As to quaternary structure, the glycine cleavage system is composed of four proteins: P, T, L and H. (R)-lipoate serves as cofactor.

Its function is as follows. The glycine cleavage system catalyzes the degradation of glycine. The H protein shuttles the methylamine group of glycine from the P protein to the T protein. The polypeptide is Glycine cleavage system H protein (Symbiobacterium thermophilum (strain DSM 24528 / JCM 14929 / IAM 14863 / T)).